Here is a 180-residue protein sequence, read N- to C-terminus: Putative adenylate kinase (180 aa).

The ATP site is built by glycine 10, glycine 12, lysine 13, threonine 14, and threonine 15. The segment at 30 to 50 is NMP; sequence NLRDFALEKGIGEVKGDELEV. The interval 99–109 is LID; the sequence is ERGYSKDKIGE. ATP-binding residues include arginine 100 and lysine 138.

It belongs to the adenylate kinase family. AK6 subfamily. Interacts with uS11. Not a structural component of 40S pre-ribosomes, but transiently interacts with them by binding to uS11.

It catalyses the reaction AMP + ATP = 2 ADP. The enzyme catalyses ATP + H2O = ADP + phosphate + H(+). In terms of biological role, broad-specificity nucleoside monophosphate (NMP) kinase that catalyzes the reversible transfer of the terminal phosphate group between nucleoside triphosphates and monophosphates. Also has ATPase activity. Involved in the late maturation steps of the 30S ribosomal particles, specifically 16S rRNA maturation. While NMP activity is not required for ribosome maturation, ATPase activity is. Associates transiently with small ribosomal subunit protein uS11. ATP hydrolysis breaks the interaction with uS11. May temporarily remove uS11 from the ribosome to enable a conformational change of the ribosomal RNA that is needed for the final maturation step of the small ribosomal subunit. This chain is Putative adenylate kinase, found in Pyrococcus furiosus (strain ATCC 43587 / DSM 3638 / JCM 8422 / Vc1).